Consider the following 360-residue polypeptide: Peptide chain release factor 1 (360 aa).

The residue at position 235 (Q235) is an N5-methylglutamine. The disordered stretch occupies residues 285–304; it reads KRQQEEASTRRNLLGSGDRS.

It belongs to the prokaryotic/mitochondrial release factor family. Post-translationally, methylated by PrmC. Methylation increases the termination efficiency of RF1.

Its subcellular location is the cytoplasm. Its function is as follows. Peptide chain release factor 1 directs the termination of translation in response to the peptide chain termination codons UAG and UAA. This chain is Peptide chain release factor 1, found in Edwardsiella ictaluri (strain 93-146).